We begin with the raw amino-acid sequence, 92 residues long: Small ribosomal subunit protein bS18 (92 aa).

The interval M1 to P27 is disordered. Over residues P12–K22 the composition is skewed to basic residues.

This sequence belongs to the bacterial ribosomal protein bS18 family. Part of the 30S ribosomal subunit. Forms a tight heterodimer with protein bS6.

In terms of biological role, binds as a heterodimer with protein bS6 to the central domain of the 16S rRNA, where it helps stabilize the platform of the 30S subunit. In Deinococcus deserti (strain DSM 17065 / CIP 109153 / LMG 22923 / VCD115), this protein is Small ribosomal subunit protein bS18.